Reading from the N-terminus, the 586-residue chain is Protein cereblon (586 aa).

Disordered stretches follow at residues 1–114 and 158–194; these read MDDE…LPRW and SQERRRSRTSEETSQEDVEQPEDPPPQQPPRPPIDIG. Basic and acidic residues predominate over residues 14 to 37; it reads GRDEDVQLEDHSQAQGLQDRRVDA. Residues 75-85 are compositionally biased toward acidic residues; sequence MVEDGLQDDTA. A compositionally biased stretch (polar residues) spans 86 to 96; the sequence is SEGSHPSSDMS. Over residues 159–168 the composition is skewed to basic and acidic residues; it reads QERRRSRTSE. Over residues 170–179 the composition is skewed to acidic residues; that stretch reads TSQEDVEQPE. A compositionally biased stretch (pro residues) spans 180-190; sequence DPPPQQPPRPP. In terms of domain architecture, Lon N-terminal spans 226–452; the sequence is HMLIFLHQHI…LIKSTFTDES (227 aa). Residues 451 to 560 enclose the CULT domain; the sequence is ESLFFCRYCN…LAGSSVRIGK (110 aa). Zn(2+) contacts are provided by C456, C459, C525, and C528.

Belongs to the CRBN family. In terms of assembly, likely a component of a DCX (DDB1-CUL4-X-box) protein ligase complex. May interact with pic/DDB1. Post-translationally, ubiquitinated.

The protein resides in the nucleus. The protein operates within protein modification; protein ubiquitination. Its function is as follows. Substrate recognition component of a DCX (DDB1-CUL4-X-box) E3 protein ligase complex that mediates the ubiquitination and subsequent proteasomal degradation of target proteins. Has an essential role in mediating growth by negatively regulating insulin signaling. It also has a role in maintaining presynaptic function in the neuromuscular junction synapses of third-instar larvae. The sequence is that of Protein cereblon from Drosophila erecta (Fruit fly).